The primary structure comprises 521 residues: Outer membrane protein assembly factor BamB (521 aa).

The N-terminal stretch at 1–19 is a signal peptide; it reads MKKLFLVIVPLLLSLLATS. A lipid anchor (N-palmitoyl cysteine) is attached at Cys-20. Residue Cys-20 is the site of S-diacylglycerol cysteine attachment. Residues 418 to 521 form a disordered region; sequence KSGSIESSPK…IGDFSKGDSD (104 aa). Basic and acidic residues predominate over residues 429–444; it reads LPDKKVDSNKTSKNDT. Residues 445–477 show a composition bias toward polar residues; the sequence is DSNPATTATSTKDIQNPANQEMINSTPVSNTST.

The protein belongs to the BamB family. In terms of assembly, part of the Bam complex.

It is found in the cell outer membrane. Functionally, part of the outer membrane protein assembly complex, which is involved in assembly and insertion of beta-barrel proteins into the outer membrane. This is Outer membrane protein assembly factor BamB from Francisella salina.